The chain runs to 277 residues: 3-methyl-2-oxobutanoate hydroxymethyltransferase (277 aa).

The Mg(2+) site is built by D54 and D93. 3-methyl-2-oxobutanoate is bound by residues 54-55 (DS), D93, and K122. E124 is a Mg(2+) binding site. The Proton acceptor role is filled by E191.

Belongs to the PanB family. In terms of assembly, homodecamer; pentamer of dimers. The cofactor is Mg(2+).

Its subcellular location is the cytoplasm. The enzyme catalyses 3-methyl-2-oxobutanoate + (6R)-5,10-methylene-5,6,7,8-tetrahydrofolate + H2O = 2-dehydropantoate + (6S)-5,6,7,8-tetrahydrofolate. It participates in cofactor biosynthesis; (R)-pantothenate biosynthesis; (R)-pantoate from 3-methyl-2-oxobutanoate: step 1/2. Its function is as follows. Catalyzes the reversible reaction in which hydroxymethyl group from 5,10-methylenetetrahydrofolate is transferred onto alpha-ketoisovalerate to form ketopantoate. This is 3-methyl-2-oxobutanoate hydroxymethyltransferase from Alkalilimnicola ehrlichii (strain ATCC BAA-1101 / DSM 17681 / MLHE-1).